The chain runs to 299 residues: uncharacterized protein (299 aa).

This is an uncharacterized protein from Mycobacterium tuberculosis (strain CDC 1551 / Oshkosh).